Reading from the N-terminus, the 598-residue chain is NADH-ubiquinone oxidoreductase chain 5 (598 aa).

14 consecutive transmembrane segments (helical) span residues Leu-6 to Ile-26, Met-32 to Ile-52, Tyr-84 to Met-100, Met-113 to Ala-133, Leu-136 to Trp-156, Thr-241 to Ile-261, Leu-272 to Ala-292, Ile-301 to Asn-320, Ala-325 to Ile-347, Thr-370 to Phe-390, Leu-409 to Met-429, Leu-456 to Pro-476, Ile-478 to Ile-498, and Leu-576 to Thr-596.

The protein belongs to the complex I subunit 5 family.

The protein resides in the mitochondrion inner membrane. The catalysed reaction is a ubiquinone + NADH + 5 H(+)(in) = a ubiquinol + NAD(+) + 4 H(+)(out). Its function is as follows. Core subunit of the mitochondrial membrane respiratory chain NADH dehydrogenase (Complex I) that is believed to belong to the minimal assembly required for catalysis. Complex I functions in the transfer of electrons from NADH to the respiratory chain. The immediate electron acceptor for the enzyme is believed to be ubiquinone. The polypeptide is NADH-ubiquinone oxidoreductase chain 5 (MT-ND5) (Petromyzon marinus (Sea lamprey)).